A 212-amino-acid polypeptide reads, in one-letter code: Uridine kinase (212 aa).

Residue 13-20 (GGSGSGKT) participates in ATP binding.

It belongs to the uridine kinase family.

The protein localises to the cytoplasm. The enzyme catalyses uridine + ATP = UMP + ADP + H(+). It catalyses the reaction cytidine + ATP = CMP + ADP + H(+). Its pathway is pyrimidine metabolism; CTP biosynthesis via salvage pathway; CTP from cytidine: step 1/3. The protein operates within pyrimidine metabolism; UMP biosynthesis via salvage pathway; UMP from uridine: step 1/1. The sequence is that of Uridine kinase from Bacillus cytotoxicus (strain DSM 22905 / CIP 110041 / 391-98 / NVH 391-98).